The following is a 165-amino-acid chain: Small ribosomal subunit protein eS10 (165 aa).

Tyrosine 12 is modified (phosphotyrosine). Residues 90 to 165 (VPATLRRSRP…FGRGRGQPPQ (76 aa)) form a disordered region. A compositionally biased stretch (basic and acidic residues) spans 97-128 (SRPETGRPRPKGPEGERPARFTRGEADRDTYR). Residues lysine 138 and lysine 139 each participate in a glycyl lysine isopeptide (Lys-Gly) (interchain with G-Cter in ubiquitin) cross-link. Serine 146 carries the post-translational modification Phosphoserine. At arginine 153 the chain carries Omega-N-methylarginine. Gly residues predominate over residues 154 to 165 (GGFGRGRGQPPQ). 2 positions are modified to symmetric dimethylarginine: arginine 158 and arginine 160.

It belongs to the eukaryotic ribosomal protein eS10 family. In terms of assembly, component of the small ribosomal subunit. The methylated form interacts with NPM1. Post-translationally, methylated by PRMT5. Methylation is necessary for its interaction with NPS1, its localization in the granular component (GC) region of the nucleolus, for the proper assembly of ribosomes, protein synthesis and optimal cell proliferation. In terms of processing, monoubiquitinated by ZNF598 when a ribosome has stalled during translation of poly(A) sequences, leading to preclude synthesis of a long poly-lysine tail and initiate the ribosome quality control (RQC) pathway to degrade the potentially detrimental aberrant nascent polypeptide. Deubiquitinated by OTUD3 and USP21, antagonizing ZNF598 activity. Deubiquitinated by OTUD1, antagonizing ZNF598 activity and stimulating formation of polysomes: deubiquitination by OTUD1 promotes stability and translation of a subset mRNAs with a high abundance of rare codons can limit the translation rate. Deubiquitinated by USP10.

The protein localises to the cytoplasm. It is found in the nucleus. Its subcellular location is the nucleolus. Component of the 40S ribosomal subunit. The ribosome is a large ribonucleoprotein complex responsible for the synthesis of proteins in the cell. The protein is Small ribosomal subunit protein eS10 (Rps10) of Rattus norvegicus (Rat).